The sequence spans 125 residues: Methylglyoxal synthase (125 aa).

Positions 1–125 constitute an MGS-like domain; that stretch reads MTERLRIALI…TAEKLIKALD (125 aa). Substrate contacts are provided by residues histidine 12, lysine 16, 38-41, and 59-60; these read TGTT and SG. Aspartate 65 functions as the Proton donor/acceptor in the catalytic mechanism. Histidine 92 lines the substrate pocket.

Belongs to the methylglyoxal synthase family.

It catalyses the reaction dihydroxyacetone phosphate = methylglyoxal + phosphate. In terms of biological role, catalyzes the formation of methylglyoxal from dihydroxyacetone phosphate. The chain is Methylglyoxal synthase from Brucella anthropi (strain ATCC 49188 / DSM 6882 / CCUG 24695 / JCM 21032 / LMG 3331 / NBRC 15819 / NCTC 12168 / Alc 37) (Ochrobactrum anthropi).